A 367-amino-acid chain; its full sequence is Protein-glutamate methylesterase/protein-glutamine glutaminase (367 aa).

In terms of domain architecture, Response regulatory spans 6–123; that stretch reads RVLVVDDSAF…SLGIKQLADE (118 aa). D57 bears the 4-aspartylphosphate mark. Positions 165–361 constitute a CheB-type methylesterase domain; it reads ISKKEIVVVI…DILLKKVNEY (197 aa). Residues S177, H204, and D303 contribute to the active site.

It belongs to the CheB family. Post-translationally, phosphorylated by CheA. Phosphorylation of the N-terminal regulatory domain activates the methylesterase activity.

It is found in the cytoplasm. The catalysed reaction is [protein]-L-glutamate 5-O-methyl ester + H2O = L-glutamyl-[protein] + methanol + H(+). It catalyses the reaction L-glutaminyl-[protein] + H2O = L-glutamyl-[protein] + NH4(+). Involved in chemotaxis. Part of a chemotaxis signal transduction system that modulates chemotaxis in response to various stimuli. Catalyzes the demethylation of specific methylglutamate residues introduced into the chemoreceptors (methyl-accepting chemotaxis proteins or MCP) by CheR. Also mediates the irreversible deamidation of specific glutamine residues to glutamic acid. This is Protein-glutamate methylesterase/protein-glutamine glutaminase from Caldanaerobacter subterraneus subsp. tengcongensis (strain DSM 15242 / JCM 11007 / NBRC 100824 / MB4) (Thermoanaerobacter tengcongensis).